Consider the following 83-residue polypeptide: Large ribosomal subunit protein bL27 (83 aa).

The segment at 1 to 26 is disordered; it reads MAHKKAGGSSKNGRDSRGQRRGVKRF.

Belongs to the bacterial ribosomal protein bL27 family.

This Desulfosudis oleivorans (strain DSM 6200 / JCM 39069 / Hxd3) (Desulfococcus oleovorans) protein is Large ribosomal subunit protein bL27.